A 328-amino-acid polypeptide reads, in one-letter code: MSTSSINGFSLSSLSPAKTSTKRTTLRPFVSASLNTSSSSSSSTFPSLIQDKPVFASSSPIITPVLREEMGKGYDEAIEELQKLLREKTELKATAAEKVEQITAQLGTTSSSDGIPKSEASERIKTGFLHFKKEKYDKNPALYGELAKGQSPPFMVFACSDSRVCPSHVLDFQPGEAFVVRNVANLVPPYDQAKYAGTGAAIEYAVLHLKVSNIVVIGHSACGGIKGLLSFPFDGTYSTDFIEEWVKIGLPAKAKVKAQHGDAPFAELCTHCEKEAVNASLGNLLTYPFVREGLVNKTLALKGGYYDFVKGSFELWGLEFGLSSTFSV.

Residues 1–15 (MSTSSINGFSLSSLS) show a composition bias toward low complexity. The interval 1-26 (MSTSSINGFSLSSLSPAKTSTKRTTL) is disordered. A chloroplast-targeting transit peptide spans 1–70 (MSTSSINGFS…IITPVLREEM (70 aa)).

Belongs to the beta-class carbonic anhydrase family. As to quaternary structure, homohexamer.

The protein resides in the plastid. It localises to the chloroplast stroma. It catalyses the reaction hydrogencarbonate + H(+) = CO2 + H2O. Reversible hydration of carbon dioxide. This chain is Carbonic anhydrase, chloroplastic, found in Pisum sativum (Garden pea).